Consider the following 442-residue polypeptide: Chromosomal replication initiator protein DnaA (442 aa).

Positions 1-75 (MDAWPRCLER…GNGEVALAVG (75 aa)) are domain I, interacts with DnaA modulators. The domain II stretch occupies residues 75 to 104 (GSRPRAPEPLPAPQAVASAPAAAPIVPFAG). The domain III, AAA+ region stretch occupies residues 105 to 322 (NLDSHYTFAN…GALNTLVARA (218 aa)). Positions 150, 152, 153, and 154 each coordinate ATP. The domain IV, binds dsDNA stretch occupies residues 323–442 (NFTGRSITVE…WEKLIRKLSE (120 aa)).

The protein belongs to the DnaA family. As to quaternary structure, oligomerizes as a right-handed, spiral filament on DNA at oriC.

Its subcellular location is the cytoplasm. Its function is as follows. Plays an essential role in the initiation and regulation of chromosomal replication. ATP-DnaA binds to the origin of replication (oriC) to initiate formation of the DNA replication initiation complex once per cell cycle. Binds the DnaA box (a 9 base pair repeat at the origin) and separates the double-stranded (ds)DNA. Forms a right-handed helical filament on oriC DNA; dsDNA binds to the exterior of the filament while single-stranded (ss)DNA is stabiized in the filament's interior. The ATP-DnaA-oriC complex binds and stabilizes one strand of the AT-rich DNA unwinding element (DUE), permitting loading of DNA polymerase. After initiation quickly degrades to an ADP-DnaA complex that is not apt for DNA replication. Binds acidic phospholipids. The chain is Chromosomal replication initiator protein DnaA from Xanthomonas campestris pv. campestris (strain 8004).